A 380-amino-acid chain; its full sequence is Type 4 apparatus protein DotM (380 aa).

A run of 2 helical transmembrane segments spans residues 18 to 38 (MAPVWIVILLFITAYFVWALA) and 99 to 119 (YPVICILVVLAFVLYNSNVTL).

The T4BSS is a complex nanomachine composed of several subcomplexes. This subunit is part of the Type IV Coupling Complex (T4CC), a subcomplex composed of the DotLMNYZ core and the IcmSW-LvgA adapter subunits, linked by the C-terminal tail of DotL. Six DotLMNYZ hetero-pentameric units may assemble into a hexameric nanomachine, forming an inner membrane channel for effectors to pass through. Interacts directly with DotL.

The protein localises to the cell inner membrane. Its function is as follows. Component of the Dot/Icm type IVB secretion system (T4BSS), which is used to inject bacterial effector proteins into eukaryotic host cells. Part of a subcomplex which recruits effector proteins and delivers them to the core transmembrane subcomplex. Forms the interacting surface for recruitment of acidic Glu-rich motif-containing effectors. In Legionella pneumophila subsp. pneumophila (strain Philadelphia 1 / ATCC 33152 / DSM 7513), this protein is Type 4 apparatus protein DotM.